The following is an 89-amino-acid chain: UPF0367 protein MAE_19160 (89 aa).

Belongs to the UPF0367 family.

The sequence is that of UPF0367 protein MAE_19160 from Microcystis aeruginosa (strain NIES-843 / IAM M-2473).